A 358-amino-acid chain; its full sequence is 3-isopropylmalate dehydrogenase 2 (358 aa).

Residue 74–87 (GPKWDKLPAESRPE) coordinates NAD(+). Residues R94, R104, R132, and D221 each coordinate substrate. 3 residues coordinate Mg(2+): D221, D245, and D249. 279–291 (GSAPDIAGQGVAN) lines the NAD(+) pocket.

It belongs to the isocitrate and isopropylmalate dehydrogenases family. LeuB type 1 subfamily. As to quaternary structure, homodimer. The cofactor is Mg(2+). It depends on Mn(2+) as a cofactor.

Its subcellular location is the cytoplasm. The enzyme catalyses (2R,3S)-3-isopropylmalate + NAD(+) = 4-methyl-2-oxopentanoate + CO2 + NADH. Its pathway is amino-acid biosynthesis; L-leucine biosynthesis; L-leucine from 3-methyl-2-oxobutanoate: step 3/4. Functionally, catalyzes the oxidation of 3-carboxy-2-hydroxy-4-methylpentanoate (3-isopropylmalate) to 3-carboxy-4-methyl-2-oxopentanoate. The product decarboxylates to 4-methyl-2 oxopentanoate. The protein is 3-isopropylmalate dehydrogenase 2 of Dechloromonas aromatica (strain RCB).